Here is a 254-residue protein sequence, read N- to C-terminus: Geranylgeranylglyceryl phosphate synthase (254 aa).

Mg(2+) is bound by residues aspartate 28 and serine 53. Sn-glycerol 1-phosphate-binding positions include 172–178, 203–204, and 225–226; these read YLEAGSG, GG, and GT.

It belongs to the GGGP/HepGP synthase family. Group II subfamily. Mg(2+) serves as cofactor.

Its subcellular location is the cytoplasm. It catalyses the reaction sn-glycerol 1-phosphate + (2E,6E,10E)-geranylgeranyl diphosphate = sn-3-O-(geranylgeranyl)glycerol 1-phosphate + diphosphate. It participates in membrane lipid metabolism; glycerophospholipid metabolism. Prenyltransferase that catalyzes the transfer of the geranylgeranyl moiety of geranylgeranyl diphosphate (GGPP) to the C3 hydroxyl of sn-glycerol-1-phosphate (G1P). This reaction is the first ether-bond-formation step in the biosynthesis of archaeal membrane lipids. The protein is Geranylgeranylglyceryl phosphate synthase of Methanococcus vannielii (strain ATCC 35089 / DSM 1224 / JCM 13029 / OCM 148 / SB).